Consider the following 490-residue polypeptide: AP-5 complex subunit mu-1 (490 aa).

In terms of domain architecture, MHD spans 206 to 476 (KPQVSISITE…LISSDYYIWN (271 aa)).

It belongs to the adaptor complexes medium subunit family. In terms of assembly, probably part of the adaptor protein complex 5 (AP-5) a tetramer composed of AP5B1, AP5M1, AP5S1 and AP5Z1.

It localises to the cytoplasm. It is found in the cytosol. The protein localises to the late endosome membrane. The protein resides in the lysosome membrane. Functionally, as part of AP-5, a probable fifth adaptor protein complex it may be involved in endosomal transport. The chain is AP-5 complex subunit mu-1 (AP5M1) from Macaca fascicularis (Crab-eating macaque).